An 88-amino-acid polypeptide reads, in one-letter code: Small ribosomal subunit protein uS15c (88 aa).

The protein belongs to the universal ribosomal protein uS15 family. In terms of assembly, part of the 30S ribosomal subunit.

The protein localises to the plastid. Its subcellular location is the chloroplast. The polypeptide is Small ribosomal subunit protein uS15c (rps15) (Physcomitrium patens (Spreading-leaved earth moss)).